The following is a 267-amino-acid chain: DNA damage-regulated autophagy modulator protein 2 (267 aa).

The next 6 membrane-spanning stretches (helical) occupy residues 8-28 (LSFL…FSYI), 53-73 (RCLF…TMYV), 87-107 (LIIK…LGLS), 118-138 (FIVH…YMFV), 160-180 (LLLV…SSIL), and 203-223 (VLHL…FGFF).

The protein belongs to the DRAM/TMEM150 family. Expressed in the retina.

The protein resides in the lysosome membrane. It localises to the photoreceptor inner segment. The protein localises to the apical cell membrane. Its function is as follows. Plays a role in the initiation of autophagy. In the retina, might be involved in the process of photoreceptor cells renewal and recycling to preserve visual function. Induces apoptotic cell death when coexpressed with DRAM1. This chain is DNA damage-regulated autophagy modulator protein 2 (Dram2), found in Mus musculus (Mouse).